The following is a 724-amino-acid chain: Hyperosmolality-gated Ca2+ permeable channel 3.1 (724 aa).

Residues 1 to 4 are Extracellular-facing; the sequence is MEFG. A helical membrane pass occupies residues 5-25; sequence SFLVSLGTSFVIFVILMLLFT. At 26–85 the chain is on the cytoplasmic side; sequence WLSRKSGNAPIYYPNRILKGLEPWEGTSLTRNPFAWMREALTSSEQDVVNLSGVDTAVHF. A helical membrane pass occupies residues 86-108; sequence VFLSTVLGIFACSSLLLLPTLLP. Residues 109 to 147 lie on the Extracellular side of the membrane; that stretch reads LAATDNNIKNTKNATDTTSKGTFSQLDNLSMANITKKSS. Residues 148–170 form a helical membrane-spanning segment; it reads RLWAFLGAVYWISLVTYFFLWKA. At 171 to 358 the chain is on the cytoplasmic side; sequence YKHVSSLRAQ…WQNLNIKLFS (188 aa). Residues 241–309 are a coiled coil; it reads EKLEGYKKKL…KAVLAEKQQT (69 aa). A helical membrane pass occupies residues 359–385; sequence RIIRQYFIYFFVAVTILFYMIPIAFVS. At 386–411 the chain is on the extracellular side; sequence AITTLKNLQRIIPFIKPVVEITAIRT. A helical transmembrane segment spans residues 412 to 439; sequence VLESFLPQIALIVFLAMLPKLLLFLSKA. Residues 440 to 448 are Cytoplasmic-facing; it reads EGIPSQSHA. Residues 449 to 472 traverse the membrane as a helical segment; it reads IRAASGKYFYFSVFNVFIGVTLAG. Topologically, residues 473–497 are extracellular; that stretch reads TLFNTVKDIAKNPKLDMIINLLATS. A helical transmembrane segment spans residues 498 to 529; the sequence is LPKSATFFLTYVALKFFIGYGLELSRIIPLII. The Cytoplasmic portion of the chain corresponds to 530–554; it reads FHLKKKYLCKTEAEVKEAWYPGDLS. A helical transmembrane segment spans residues 555–574; that stretch reads YATRVPGDMLILTITFCYSV. Ile-575 is a topological domain (extracellular). Residues 576–594 traverse the membrane as a helical segment; it reads APLILIFGITYFGLGWLVL. Residues 595-612 are Cytoplasmic-facing; that stretch reads RNQALKVYVPSYESYGRM. A helical transmembrane segment spans residues 613–636; the sequence is WPHIHQRILAALFLFQVVMFGYLG. At 637–641 the chain is on the extracellular side; that stretch reads AKTFF. Residues 642-662 traverse the membrane as a helical segment; it reads YTALVIPLIITSLIFGYVCRQ. The Cytoplasmic portion of the chain corresponds to 663 to 724; the sequence is KFYGGFEHTA…YQDFNAIAGV (62 aa).

Belongs to the CSC1 (TC 1.A.17) family. Homodimer.

The protein resides in the membrane. Functionally, acts as a hyperosmolarity-gated non-selective cation channel that permeates Ca(2+) ions. Mechanosensitive ion channel that converts mechanical stimuli into a flow of ions: activated in response to membrane stretch. Not activated in response to membrane poke. In Arabidopsis thaliana (Mouse-ear cress), this protein is Hyperosmolality-gated Ca2+ permeable channel 3.1.